The chain runs to 146 residues: Late protein H7 (146 aa).

Residues 10-32 form a helical membrane-spanning segment; it reads LAMTAFFGELNTLDIMALIMSIF.

It belongs to the chordopoxvirinae H7 family.

It is found in the membrane. In terms of biological role, contributes to the formation of crescents and immature virions (IV). This is Late protein H7 from Vaccinia virus (strain Tian Tan) (VACV).